The primary structure comprises 327 residues: E3 ubiquitin ligase Rnf121 (327 aa).

A run of 5 helical transmembrane segments spans residues 50 to 70 (MHAEMVLILIATLVVAQLLLV), 79 to 96 (SYNMVTLFQMWIVPVYFT), 99 to 119 (LHWWRFLGIWIVFSIITAYIT), 148 to 168 (ATGIVGYIAVMFTLFGLNLLF), and 173 to 193 (EDAMDFGISLLFYGLYYGVLG). Residues 226-276 (CAVCGQQIFVDVNEEGIIENTYRLSCNHVFHEFCIRGWCIVGKKQTCPYCK) form an RING-type; atypical zinc finger.

It belongs to the RNF121 family.

Its subcellular location is the endoplasmic reticulum membrane. It catalyses the reaction S-ubiquitinyl-[E2 ubiquitin-conjugating enzyme]-L-cysteine + [acceptor protein]-L-lysine = [E2 ubiquitin-conjugating enzyme]-L-cysteine + N(6)-ubiquitinyl-[acceptor protein]-L-lysine.. Its pathway is protein modification; protein ubiquitination. E3 ubiquitin ligase which accepts ubiquitin and transfers it to substrates thereby promoting their degradation by the endoplasmic reticulum-associated degradation (ERAD) pathway which is a pathway involved in ubiquitin-dependent degradation of misfolded endoplasmic reticulum proteins. May regulate the unfolded protein response to reduce endoplasmic reticulum stress. This chain is E3 ubiquitin ligase Rnf121 (rnf121), found in Xenopus laevis (African clawed frog).